The following is a 542-amino-acid chain: Phenylalanine--tRNA ligase beta subunit (542 aa).

In terms of domain architecture, B5 spans 269–344; it reads LRRYTVSVSA…MTIGYDKLSP (76 aa). Mg(2+)-binding residues include Asp322, Asp328, Glu331, and Glu332.

This sequence belongs to the phenylalanyl-tRNA synthetase beta subunit family. Type 2 subfamily. Tetramer of two alpha and two beta subunits. The cofactor is Mg(2+).

The protein resides in the cytoplasm. It carries out the reaction tRNA(Phe) + L-phenylalanine + ATP = L-phenylalanyl-tRNA(Phe) + AMP + diphosphate + H(+). This is Phenylalanine--tRNA ligase beta subunit from Sulfolobus acidocaldarius (strain ATCC 33909 / DSM 639 / JCM 8929 / NBRC 15157 / NCIMB 11770).